We begin with the raw amino-acid sequence, 717 residues long: Fatty acid oxidation complex subunit alpha (717 aa).

Residues 1 to 190 form an enoyl-CoA hydratase/isomerase region; sequence MIHAGNAITV…KDGAVDAVVA (190 aa). A substrate-binding site is contributed by Asp-298. Residues 313-717 are 3-hydroxyacyl-CoA dehydrogenase; sequence HPVNQAAVLG…MAANNKKFYG (405 aa). NAD(+)-binding positions include Met-326, Asp-345, 402-404, Lys-409, and Ser-431; that span reads VTE. His-452 acts as the For 3-hydroxyacyl-CoA dehydrogenase activity in catalysis. Asn-455 is an NAD(+) binding site. Asn-502 lines the substrate pocket.

This sequence in the N-terminal section; belongs to the enoyl-CoA hydratase/isomerase family. In the C-terminal section; belongs to the 3-hydroxyacyl-CoA dehydrogenase family. In terms of assembly, heterotetramer of two alpha chains (FadB) and two beta chains (FadA).

The enzyme catalyses a (3S)-3-hydroxyacyl-CoA + NAD(+) = a 3-oxoacyl-CoA + NADH + H(+). It carries out the reaction a (3S)-3-hydroxyacyl-CoA = a (2E)-enoyl-CoA + H2O. It catalyses the reaction a 4-saturated-(3S)-3-hydroxyacyl-CoA = a (3E)-enoyl-CoA + H2O. The catalysed reaction is (3S)-3-hydroxybutanoyl-CoA = (3R)-3-hydroxybutanoyl-CoA. The enzyme catalyses a (3Z)-enoyl-CoA = a 4-saturated (2E)-enoyl-CoA. It carries out the reaction a (3E)-enoyl-CoA = a 4-saturated (2E)-enoyl-CoA. It participates in lipid metabolism; fatty acid beta-oxidation. Involved in the aerobic and anaerobic degradation of long-chain fatty acids via beta-oxidation cycle. Catalyzes the formation of 3-oxoacyl-CoA from enoyl-CoA via L-3-hydroxyacyl-CoA. It can also use D-3-hydroxyacyl-CoA and cis-3-enoyl-CoA as substrate. The polypeptide is Fatty acid oxidation complex subunit alpha (Acinetobacter baumannii (strain ACICU)).